The following is a 752-amino-acid chain: Protein GCN20 (752 aa).

At A2 the chain carries N-acetylalanine. ABC transporter domains follow at residues I199–A464 and I532–V748. Residues G232 to S239 and G565 to T572 contribute to the ATP site.

Belongs to the ABC transporter superfamily. ABCF family. EF3 subfamily. Interacts (via N-terminus) with GCN1 (via C-terminus); this interaction stimulates GCN2 kinase activity in response to amino acid starvation. The GCN1-GCN20 complex interacts with GCN2 on translating ribosomes in amino acid-starved cells; this association stimulates GCN2 kinase activation by uncharged tRNAs, and hence allowing GCN4 translational activation and derepression of amino acid biosynthetic genes. Associates with ribosomes.

Functionally, acts as a positive activator of the GCN2 protein kinase activity in response to in response to low amino acid, carbon, or purine availability. Component of the GCN1-GCN20 complex that forms a complex with GCN2 on translating ribosomes; during this process, GCN20 helps GCN1 to act as a chaperone to facilitate delivery of uncharged tRNAs that enter the A site of ribosomes to the tRNA-binding domain of GCN2, and hence stimulating GCN2 kinase activity. Participates in gene-specific mRNA translation activation, such as the transcriptional activator GCN4, by promoting the GCN2-mediated phosphorylation of eukaryotic translation initiation factor 2 (eIF-2-alpha/SUI2) on 'Ser-52', and hence allowing GCN4-mediated reprogramming of amino acid biosynthetic gene expression to alleviate nutrient depletion. This chain is Protein GCN20, found in Saccharomyces cerevisiae (strain ATCC 204508 / S288c) (Baker's yeast).